The following is a 196-amino-acid chain: Probable nicotinate-nucleotide adenylyltransferase (196 aa).

This sequence belongs to the NadD family.

The enzyme catalyses nicotinate beta-D-ribonucleotide + ATP + H(+) = deamido-NAD(+) + diphosphate. Its pathway is cofactor biosynthesis; NAD(+) biosynthesis; deamido-NAD(+) from nicotinate D-ribonucleotide: step 1/1. In terms of biological role, catalyzes the reversible adenylation of nicotinate mononucleotide (NaMN) to nicotinic acid adenine dinucleotide (NaAD). The chain is Probable nicotinate-nucleotide adenylyltransferase from Caldicellulosiruptor bescii (strain ATCC BAA-1888 / DSM 6725 / KCTC 15123 / Z-1320) (Anaerocellum thermophilum).